A 492-amino-acid polypeptide reads, in one-letter code: N-succinylglutamate 5-semialdehyde dehydrogenase (492 aa).

225–230 (GSSNTG) is a binding site for NAD(+). Catalysis depends on residues E248 and C282.

This sequence belongs to the aldehyde dehydrogenase family. AstD subfamily.

It catalyses the reaction N-succinyl-L-glutamate 5-semialdehyde + NAD(+) + H2O = N-succinyl-L-glutamate + NADH + 2 H(+). Its pathway is amino-acid degradation; L-arginine degradation via AST pathway; L-glutamate and succinate from L-arginine: step 4/5. Catalyzes the NAD-dependent reduction of succinylglutamate semialdehyde into succinylglutamate. The polypeptide is N-succinylglutamate 5-semialdehyde dehydrogenase (Colwellia psychrerythraea (strain 34H / ATCC BAA-681) (Vibrio psychroerythus)).